The chain runs to 415 residues: Serine hydroxymethyltransferase (415 aa).

(6S)-5,6,7,8-tetrahydrofolate contacts are provided by residues Leu-119 and 123–125 (GHL). Lys-228 carries the post-translational modification N6-(pyridoxal phosphate)lysine. 353–355 (SAF) contacts (6S)-5,6,7,8-tetrahydrofolate.

Belongs to the SHMT family. As to quaternary structure, homodimer. It depends on pyridoxal 5'-phosphate as a cofactor.

The protein localises to the cytoplasm. It catalyses the reaction (6R)-5,10-methylene-5,6,7,8-tetrahydrofolate + glycine + H2O = (6S)-5,6,7,8-tetrahydrofolate + L-serine. It functions in the pathway one-carbon metabolism; tetrahydrofolate interconversion. Its pathway is amino-acid biosynthesis; glycine biosynthesis; glycine from L-serine: step 1/1. Functionally, catalyzes the reversible interconversion of serine and glycine with tetrahydrofolate (THF) serving as the one-carbon carrier. Also exhibits THF-independent aldolase activity toward beta-hydroxyamino acids, producing glycine and aldehydes, via a retro-aldol mechanism. The protein is Serine hydroxymethyltransferase of Haloarcula marismortui (strain ATCC 43049 / DSM 3752 / JCM 8966 / VKM B-1809) (Halobacterium marismortui).